The following is a 150-amino-acid chain: Large ribosomal subunit protein uL13 (150 aa).

Residues 128-150 (GSDHPHSAQEPKILSLNSESVTK) form a disordered region.

The protein belongs to the universal ribosomal protein uL13 family. Part of the 50S ribosomal subunit.

This protein is one of the early assembly proteins of the 50S ribosomal subunit, although it is not seen to bind rRNA by itself. It is important during the early stages of 50S assembly. The sequence is that of Large ribosomal subunit protein uL13 from Prochlorococcus marinus (strain NATL1A).